Reading from the N-terminus, the 250-residue chain is Uracil-DNA glycosylase (250 aa).

Asp78 (proton acceptor) is an active-site residue. The tract at residues 228-250 is disordered; sequence RGQKPVDWSGEQNNASRQGEFAL.

The protein belongs to the uracil-DNA glycosylase (UDG) superfamily. UNG family.

The protein localises to the cytoplasm. The enzyme catalyses Hydrolyzes single-stranded DNA or mismatched double-stranded DNA and polynucleotides, releasing free uracil.. Excises uracil residues from the DNA which can arise as a result of misincorporation of dUMP residues by DNA polymerase or due to deamination of cytosine. In Bordetella pertussis (strain Tohama I / ATCC BAA-589 / NCTC 13251), this protein is Uracil-DNA glycosylase.